We begin with the raw amino-acid sequence, 224 residues long: Inhibitor of apoptosis protein (224 aa).

A BIR repeat occupies 29–92; it reads IDARNQSFAI…GFWSRNCGFM (64 aa). Residues cysteine 62, cysteine 65, histidine 82, and cysteine 89 each contribute to the Zn(2+) site.

Belongs to the asfivirus IAP family. In terms of assembly, interacts with subunit p17 of host CASP3.

It localises to the host cytoplasm. Its subcellular location is the virion. Prevent apoptosis of host cell by inhibiting caspase-3/CASP3 activation to promote the viral replication. Also induces the activation of host NF-kappaB. The protein is Inhibitor of apoptosis protein (p27) of African swine fever virus (isolate Pig/Haiti/H811/1981) (ASFV).